The primary structure comprises 258 residues: Imidazole glycerol phosphate synthase subunit HisF (258 aa).

Active-site residues include Asp11 and Asp130.

It belongs to the HisA/HisF family. As to quaternary structure, heterodimer of HisH and HisF.

It localises to the cytoplasm. The catalysed reaction is 5-[(5-phospho-1-deoxy-D-ribulos-1-ylimino)methylamino]-1-(5-phospho-beta-D-ribosyl)imidazole-4-carboxamide + L-glutamine = D-erythro-1-(imidazol-4-yl)glycerol 3-phosphate + 5-amino-1-(5-phospho-beta-D-ribosyl)imidazole-4-carboxamide + L-glutamate + H(+). It participates in amino-acid biosynthesis; L-histidine biosynthesis; L-histidine from 5-phospho-alpha-D-ribose 1-diphosphate: step 5/9. Its function is as follows. IGPS catalyzes the conversion of PRFAR and glutamine to IGP, AICAR and glutamate. The HisF subunit catalyzes the cyclization activity that produces IGP and AICAR from PRFAR using the ammonia provided by the HisH subunit. This chain is Imidazole glycerol phosphate synthase subunit HisF, found in Photorhabdus laumondii subsp. laumondii (strain DSM 15139 / CIP 105565 / TT01) (Photorhabdus luminescens subsp. laumondii).